The sequence spans 241 residues: Leucyl/phenylalanyl-tRNA--protein transferase (241 aa).

This sequence belongs to the L/F-transferase family.

The protein resides in the cytoplasm. It catalyses the reaction N-terminal L-lysyl-[protein] + L-leucyl-tRNA(Leu) = N-terminal L-leucyl-L-lysyl-[protein] + tRNA(Leu) + H(+). The enzyme catalyses N-terminal L-arginyl-[protein] + L-leucyl-tRNA(Leu) = N-terminal L-leucyl-L-arginyl-[protein] + tRNA(Leu) + H(+). The catalysed reaction is L-phenylalanyl-tRNA(Phe) + an N-terminal L-alpha-aminoacyl-[protein] = an N-terminal L-phenylalanyl-L-alpha-aminoacyl-[protein] + tRNA(Phe). Functions in the N-end rule pathway of protein degradation where it conjugates Leu, Phe and, less efficiently, Met from aminoacyl-tRNAs to the N-termini of proteins containing an N-terminal arginine or lysine. The polypeptide is Leucyl/phenylalanyl-tRNA--protein transferase (Neisseria meningitidis serogroup C / serotype 2a (strain ATCC 700532 / DSM 15464 / FAM18)).